A 175-amino-acid chain; its full sequence is Small ribosomal subunit protein mS38 (175 aa).

Belongs to the mitochondrion-specific ribosomal protein mS38 family. As to quaternary structure, component of the mitochondrial small ribosomal subunit (mt-SSU). Mature yeast 74S mitochondrial ribosomes consist of a small (37S) and a large (54S) subunit. The 37S small subunit contains a 15S ribosomal RNA (15S mt-rRNA) and at least 32 different proteins. The 54S large subunit contains a 21S rRNA (21S mt-rRNA) and at least 45 different proteins.

The protein resides in the mitochondrion. It localises to the mitochondrion inner membrane. Its function is as follows. Component of the mitochondrial ribosome (mitoribosome), a dedicated translation machinery responsible for the synthesis of mitochondrial genome-encoded proteins, including at least some of the essential transmembrane subunits of the mitochondrial respiratory chain. The mitoribosomes are attached to the mitochondrial inner membrane and translation products are cotranslationally integrated into the membrane. mS38 is also involved in the splicing of the COX1 mRNA. The polypeptide is Small ribosomal subunit protein mS38 (cox24) (Schizosaccharomyces pombe (strain 972 / ATCC 24843) (Fission yeast)).